The chain runs to 331 residues: Gamma-parvin (331 aa).

Residue methionine 1 is modified to N-acetylmethionine. Residues 17-39 (EPPAEEELSKGGKKKYLPPTSRK) form a disordered region. 2 Calponin-homology (CH) domains span residues 44–151 (EELQ…KRFQ) and 210–317 (NAVK…CKHT).

The protein belongs to the parvin family. In terms of assembly, interacts with ILK; the interaction promotes the establishment of cell polarity required for leukocyte migration. Interacts with ARHGEF6; the guanine nucleotide exchange factor activity of ARHGEF6 is essential for the PARVG-induced enhancement of cell spreading. As to expression, expressed predominantly in lymphoid organs, including spleen, thymus, lymph node, bone marrow and peripheral blood leukocytes and moderately in the digestive tract, including stomach, duodenum, jejunum, ileum, ileocecum and appendix, as well as in lung and liver. Also expressed in tumors, but at a lower level than in the corresponding normal tissues.

It localises to the cell junction. The protein resides in the focal adhesion. Its subcellular location is the cell membrane. It is found in the cytoplasm. The protein localises to the cytoskeleton. Plays a role with ILK in promoting the cell adhesion and spreading of leukocytes. This Homo sapiens (Human) protein is Gamma-parvin (PARVG).